The following is a 144-amino-acid chain: Bacilliredoxin BCE_4227 (144 aa).

The protein belongs to the bacilliredoxin family.

In Bacillus cereus (strain ATCC 10987 / NRS 248), this protein is Bacilliredoxin BCE_4227.